The following is a 406-amino-acid chain: GTPase Obg (406 aa).

Residues 1-159 (MRFVDEAVIT…REIRLELKVL (159 aa)) form the Obg domain. Residues 120 to 143 (GGEGGLGNTHFKSSTNRAPRKCTT) form a disordered region. The 174-residue stretch at 160–333 (ADVGLLGMPN…VVYYLMDQIE (174 aa)) folds into the OBG-type G domain. GTP-binding positions include 166–173 (GMPNAGKS), 191–195 (FTTMV), 213–216 (DIPG), 283–286 (NKLD), and 314–316 (SGL). Positions 173 and 193 each coordinate Mg(2+). The interval 381–406 (ESMMDDDDDFDDDEDDGDVESIYVRD) is disordered. The span at 383-399 (MMDDDDDFDDDEDDGDV) shows a compositional bias: acidic residues.

This sequence belongs to the TRAFAC class OBG-HflX-like GTPase superfamily. OBG GTPase family. As to quaternary structure, monomer. Mg(2+) serves as cofactor.

Its subcellular location is the cytoplasm. In terms of biological role, an essential GTPase which binds GTP, GDP and possibly (p)ppGpp with moderate affinity, with high nucleotide exchange rates and a fairly low GTP hydrolysis rate. Plays a role in control of the cell cycle, stress response, ribosome biogenesis and in those bacteria that undergo differentiation, in morphogenesis control. The sequence is that of GTPase Obg from Acinetobacter baumannii (strain ACICU).